Here is a 34-residue protein sequence, read N- to C-terminus: Photosystem I reaction center subunit XII (34 aa).

A helical membrane pass occupies residues 9–29 (LIALSLIVVVHAGVLALRLGI).

The protein belongs to the PsaM family.

It localises to the cellular thylakoid membrane. The sequence is that of Photosystem I reaction center subunit XII from Prochlorococcus marinus (strain MIT 9312).